The sequence spans 353 residues: UDP-N-acetylglucosamine--N-acetylmuramyl-(pentapeptide) pyrophosphoryl-undecaprenol N-acetylglucosamine transferase (353 aa).

Residues Thr-10–Gly-12, Asn-124, Ser-183, and Gln-283 contribute to the UDP-N-acetyl-alpha-D-glucosamine site.

The protein belongs to the glycosyltransferase 28 family. MurG subfamily.

It localises to the cell inner membrane. It catalyses the reaction di-trans,octa-cis-undecaprenyl diphospho-N-acetyl-alpha-D-muramoyl-L-alanyl-D-glutamyl-meso-2,6-diaminopimeloyl-D-alanyl-D-alanine + UDP-N-acetyl-alpha-D-glucosamine = di-trans,octa-cis-undecaprenyl diphospho-[N-acetyl-alpha-D-glucosaminyl-(1-&gt;4)]-N-acetyl-alpha-D-muramoyl-L-alanyl-D-glutamyl-meso-2,6-diaminopimeloyl-D-alanyl-D-alanine + UDP + H(+). Its pathway is cell wall biogenesis; peptidoglycan biosynthesis. In terms of biological role, cell wall formation. Catalyzes the transfer of a GlcNAc subunit on undecaprenyl-pyrophosphoryl-MurNAc-pentapeptide (lipid intermediate I) to form undecaprenyl-pyrophosphoryl-MurNAc-(pentapeptide)GlcNAc (lipid intermediate II). The polypeptide is UDP-N-acetylglucosamine--N-acetylmuramyl-(pentapeptide) pyrophosphoryl-undecaprenol N-acetylglucosamine transferase (Helicobacter pylori (strain P12)).